The primary structure comprises 364 residues: Putative agmatine deiminase (364 aa).

Residue cysteine 355 is the Amidino-cysteine intermediate of the active site.

The protein belongs to the agmatine deiminase family.

The catalysed reaction is agmatine + H2O = N-carbamoylputrescine + NH4(+). This chain is Putative agmatine deiminase, found in Mycoplasma capricolum subsp. capricolum (strain California kid / ATCC 27343 / NCTC 10154).